A 130-amino-acid polypeptide reads, in one-letter code: Putative pre-16S rRNA nuclease (130 aa).

This sequence belongs to the YqgF nuclease family.

It localises to the cytoplasm. Its function is as follows. Could be a nuclease involved in processing of the 5'-end of pre-16S rRNA. In Sulfurimonas denitrificans (strain ATCC 33889 / DSM 1251) (Thiomicrospira denitrificans (strain ATCC 33889 / DSM 1251)), this protein is Putative pre-16S rRNA nuclease.